The sequence spans 122 residues: Large ribosomal subunit protein uL14c (122 aa).

This sequence belongs to the universal ribosomal protein uL14 family. As to quaternary structure, part of the 50S ribosomal subunit.

It localises to the plastid. It is found in the chloroplast. Functionally, binds to 23S rRNA. The sequence is that of Large ribosomal subunit protein uL14c from Gracilaria tenuistipitata var. liui (Red alga).